A 485-amino-acid polypeptide reads, in one-letter code: Cysteine--tRNA ligase (485 aa).

Position 27 (cysteine 27) interacts with Zn(2+). The short motif at 29–39 (ITAYDLCHLGH) is the 'HIGH' region element. The Zn(2+) site is built by cysteine 208, histidine 233, and glutamate 237. The 'KMSKS' region signature appears at 265 to 269 (KMSKS). Lysine 268 provides a ligand contact to ATP.

It belongs to the class-I aminoacyl-tRNA synthetase family. In terms of assembly, monomer. The cofactor is Zn(2+).

The protein resides in the cytoplasm. The catalysed reaction is tRNA(Cys) + L-cysteine + ATP = L-cysteinyl-tRNA(Cys) + AMP + diphosphate. This chain is Cysteine--tRNA ligase, found in Oleidesulfovibrio alaskensis (strain ATCC BAA-1058 / DSM 17464 / G20) (Desulfovibrio alaskensis).